An 874-amino-acid chain; its full sequence is Alanine--tRNA ligase (874 aa).

H563, H567, C665, and H669 together coordinate Zn(2+).

This sequence belongs to the class-II aminoacyl-tRNA synthetase family. The cofactor is Zn(2+).

It localises to the cytoplasm. It carries out the reaction tRNA(Ala) + L-alanine + ATP = L-alanyl-tRNA(Ala) + AMP + diphosphate. Functionally, catalyzes the attachment of alanine to tRNA(Ala) in a two-step reaction: alanine is first activated by ATP to form Ala-AMP and then transferred to the acceptor end of tRNA(Ala). Also edits incorrectly charged Ser-tRNA(Ala) and Gly-tRNA(Ala) via its editing domain. The chain is Alanine--tRNA ligase from Actinobacillus pleuropneumoniae serotype 3 (strain JL03).